Reading from the N-terminus, the 399-residue chain is Dof zinc finger protein DOF5.1 (399 aa).

The Dof-type zinc finger occupies 95 to 149 (LKCPRCDSTNTKFCYFNNYSLTQPRHFCKACRRYWTRGGALRSVPVGGGCRRNKR). Zn(2+) contacts are provided by Cys-97, Cys-100, Cys-122, and Cys-125. The tract at residues 139-176 (PVGGGCRRNKRTKNSSGGGGGSTSSGNSKSQDSATSND) is disordered.

As to expression, expressed ubiquitously, especially in the vascular tissues, except in seeds, petals and anthers. Specific to the vascular tissues in young leaves, cotyledons and flower buds. The PEAR proteins (e.g. DOF2.4, DOF5.1, DOF3.2, DOF1.1, DOF5.6 and DOF5.3) form a short-range concentration gradient that peaks at protophloem sieve elements (PSE).

It is found in the nucleus. Its function is as follows. Transcription factor that binds specifically to a 5'-AA[AG]G-3' consensus core sequence. Binds to 5'-TAAAGT-3' motif in REV promoter to triggers its transcription, thus regulating adaxial-abaxial polarity and influencing leaf axial patterning in an auxin transport- and response-dependent manner (e.g. IAA6 and IAA19 genes expression). Probably involved in early processes for vascular development. The PEAR proteins (e.g. DOF2.4, DOF5.1, DOF3.2, DOF1.1, DOF5.6 and DOF5.3) activate gene expression that promotes radial growth of protophloem sieve elements. The chain is Dof zinc finger protein DOF5.1 from Arabidopsis thaliana (Mouse-ear cress).